We begin with the raw amino-acid sequence, 263 residues long: Lens fiber major intrinsic protein (263 aa).

Residues 1 to 9 (MWELRSASF) are Cytoplasmic-facing. The helical transmembrane segment at 10-29 (WRAIFAEFFATLFYVFFGLG) threads the bilayer. Residues 30–41 (SSLRWAPGPLHV) lie on the Extracellular side of the membrane. A helical transmembrane segment spans residues 42–59 (LQVALAFGLALATLVQTV). Residues 60 to 61 (GH) lie on the Cytoplasmic side of the membrane. Residues 62–77 (ISGAHVNPAVTFAFLV) constitute an intramembrane region (discontinuously helical). The short motif at 68–70 (NPA) is the NPA 1 element. The Cytoplasmic segment spans residues 78–82 (GSQMS). A helical transmembrane segment spans residues 83–106 (LLRAFCYIAAQLLGAVAGAAVLYS). Residues 107 to 127 (VTPPAVRGNLALNTLHAGVSV) lie on the Extracellular side of the membrane. A helical membrane pass occupies residues 128 to 148 (GQATTVEIFLTLQFVLCIFAT). Over 149–156 (YDERRNGR) the chain is Cytoplasmic. Residues 157 to 175 (MGSVALAVGFSLTLGHLFG) traverse the membrane as a helical segment. Residues 176–178 (MYY) are Extracellular-facing. An intramembrane region (discontinuously helical) is located at residues 179 to 193 (TGAGMNPARSFAPAI). Positions 184-186 (NPA) match the NPA 2 motif. Residues 194–200 (LTRNFSN) are Extracellular-facing. A helical membrane pass occupies residues 201 to 222 (HWVYWVGPIIGGGLGSLLYDFL). The Cytoplasmic segment spans residues 223-263 (LFPRLKSVSERLSILKGARPSDSNGQPEGTGEPVELKTQAL). Residues 227-237 (LKSVSERLSIL) are interaction with CALM. Phosphoserine occurs at positions 235, 243, and 245. The tract at residues 240–263 (ARPSDSNGQPEGTGEPVELKTQAL) is disordered. Asparagine 246 carries the deamidated asparagine modification.

The protein belongs to the MIP/aquaporin (TC 1.A.8) family. In terms of assembly, homotetramer; each monomer provides an independent water pore. Two homotetramers on opposing membranes can dimerize, forming a cell-cell junction. Interacts with CALM; the calcium-calmodulin/CALM complex interacts with the cytoplasmic domains of two aquaporins, leading to channel closure. Interacts with BFSP1 (via C-terminus); prevents calcium-dependent inhibition of the water channel activity. Post-translationally, subject to partial proteolytic cleavage in the eye lens core. Partial proteolysis promotes interactions between tetramers from adjoining membranes. Fatty acylated at Met-1 and Lys-238. The acyl modifications, in decreasing order of ion abundance, are: oleoyl (C18:1) &gt; palmitoyl (C16:0) &gt; stearoyl (C18:0) &gt; eicosenoyl (C20:1) &gt; dihomo-gamma-linolenoyl (C20:3) &gt; palmitoleoyl (C16:1) &gt; eicosadienoyl (C20:2).

It localises to the cell membrane. Its subcellular location is the cell junction. The catalysed reaction is H2O(in) = H2O(out). The water channel activity is inhibited by calcium through calmodulin/CALM. Its function is as follows. Aquaporins form homotetrameric transmembrane channels, with each monomer independently mediating water transport across the plasma membrane along its osmotic gradient. Specifically expressed in lens fiber cells, this aquaporin is crucial for maintaining lens water homeostasis and transparency. Beyond water permeability, it also acts as a cell-to-cell adhesion molecule, forming thin junctions between lens fiber cells that are essential for maintaining the ordered structure and transparency of the lens. The polypeptide is Lens fiber major intrinsic protein (Rattus norvegicus (Rat)).